The sequence spans 394 residues: Elongation factor Tu 2 (394 aa).

The tr-type G domain maps to 10 to 204; the sequence is KPHVNVGTIG…ALDSYIPEPE (195 aa). The segment at 19–26 is G1; that stretch reads GHVDHGKT. 19–26 contacts GTP; sequence GHVDHGKT. Position 26 (threonine 26) interacts with Mg(2+). A G2 region spans residues 60-64; that stretch reads GITIS. The G3 stretch occupies residues 81 to 84; sequence DCPG. Residues 81 to 85 and 136 to 139 contribute to the GTP site; these read DCPGH and NKCD. The G4 stretch occupies residues 136 to 139; that stretch reads NKCD. A G5 region spans residues 174 to 176; sequence SAL.

It belongs to the TRAFAC class translation factor GTPase superfamily. Classic translation factor GTPase family. EF-Tu/EF-1A subfamily. As to quaternary structure, monomer.

The protein localises to the cytoplasm. It catalyses the reaction GTP + H2O = GDP + phosphate + H(+). GTP hydrolase that promotes the GTP-dependent binding of aminoacyl-tRNA to the A-site of ribosomes during protein biosynthesis. This Photorhabdus laumondii subsp. laumondii (strain DSM 15139 / CIP 105565 / TT01) (Photorhabdus luminescens subsp. laumondii) protein is Elongation factor Tu 2.